Here is a 100-residue protein sequence, read N- to C-terminus: Small ribosomal subunit protein uS14c (100 aa).

Belongs to the universal ribosomal protein uS14 family. As to quaternary structure, part of the 30S ribosomal subunit.

The protein localises to the plastid. The protein resides in the chloroplast. In terms of biological role, binds 16S rRNA, required for the assembly of 30S particles. The sequence is that of Small ribosomal subunit protein uS14c from Tetradesmus obliquus (Green alga).